The following is a 211-amino-acid chain: Orotidine 5'-phosphate decarboxylase (211 aa).

Substrate-binding positions include Asp-7, Lys-29, 57–66 (DLKLADIPNT), Ser-109, 162–172 (PGIGAQGGSPV), Gly-185, and Arg-186. Residue Lys-59 is the Proton donor of the active site.

It belongs to the OMP decarboxylase family. Type 1 subfamily. In terms of assembly, homodimer.

The enzyme catalyses orotidine 5'-phosphate + H(+) = UMP + CO2. Its pathway is pyrimidine metabolism; UMP biosynthesis via de novo pathway; UMP from orotate: step 2/2. Functionally, catalyzes the decarboxylation of orotidine 5'-monophosphate (OMP) to uridine 5'-monophosphate (UMP). This is Orotidine 5'-phosphate decarboxylase from Pyrococcus furiosus (strain ATCC 43587 / DSM 3638 / JCM 8422 / Vc1).